Consider the following 197-residue polypeptide: uncharacterized protein (197 aa).

Over residues 1-10 (MKNNYTSLKS) the composition is skewed to polar residues. 2 disordered regions span residues 1 to 46 (MKNN…PPYS) and 54 to 73 (LVPE…NVER). Basic and acidic residues predominate over residues 18–37 (LKTGHEIDLEKGPLPEHNSE). The segment covering 58–69 (DSSTGPTETANP) has biased composition (polar residues). Transmembrane regions (helical) follow at residues 83 to 105 (NIYS…FTAW) and 120 to 142 (AFFV…EPGL).

Belongs to the WTF family.

Its subcellular location is the endoplasmic reticulum membrane. This is an uncharacterized protein from Schizosaccharomyces pombe (strain 972 / ATCC 24843) (Fission yeast).